Here is a 136-residue protein sequence, read N- to C-terminus: Sec-independent protein translocase protein TatB (136 aa).

Residues 1–21 (MFDIGFWELVLISVIGLVVLG) form a helical membrane-spanning segment. The tract at residues 66–136 (ASKQGLSDLD…TTPPRQDKNE (71 aa)) is disordered. 2 stretches are compositionally biased toward basic and acidic residues: residues 77–89 (ELQK…KETA) and 96–107 (YKKDIDDIKTSL). The segment covering 108 to 130 (DKNPSGTTQQENSILDSSKTTPP) has biased composition (polar residues).

This sequence belongs to the TatB family. As to quaternary structure, the Tat system comprises two distinct complexes: a TatABC complex, containing multiple copies of TatA, TatB and TatC subunits, and a separate TatA complex, containing only TatA subunits. Substrates initially bind to the TatABC complex, which probably triggers association of the separate TatA complex to form the active translocon.

The protein localises to the cell inner membrane. Its function is as follows. Part of the twin-arginine translocation (Tat) system that transports large folded proteins containing a characteristic twin-arginine motif in their signal peptide across membranes. Together with TatC, TatB is part of a receptor directly interacting with Tat signal peptides. TatB may form an oligomeric binding site that transiently accommodates folded Tat precursor proteins before their translocation. The sequence is that of Sec-independent protein translocase protein TatB from Psychromonas ingrahamii (strain DSM 17664 / CCUG 51855 / 37).